Consider the following 145-residue polypeptide: Synaptojanin-2-binding protein (145 aa).

Residues 1-117 (MNGRVDYLVT…VHRGEGEPSG (117 aa)) lie on the Cytoplasmic side of the membrane. Positions 13 to 100 (EINLTRGPSG…AVSLRVQHRL (88 aa)) constitute a PDZ domain. Residues 118 to 138 (VPVAMVLLPVFALTMVAVWAF) traverse the membrane as a helical; Anchor for type IV membrane protein segment. The Mitochondrial intermembrane portion of the chain corresponds to 139–145 (VRYRKQL).

Binds (via the PDZ domain) to isoform 2A of SYNJ2 (via the unique motif in the C-terminus). Interacts (via C-terminus) with RALBP1. Interacts (via PDZ domain) with ACVR2A (via C-terminus) and ACVR2B (via C-terminus). Forms a ternary complex with ACVR2A and RALBP1. Interacts with MAPK12. Interacts with DLL1; enhances DLL1 protein stability, and promotes notch signaling in endothelial cells. As to expression, isoform 1 and isoform 2 are widely expressed, notably in brain, heart, lung, liver, kidney, skeletal muscle, ovary and testis. Isoform 3 is detected only in heart, spleen and testis.

It localises to the mitochondrion outer membrane. It is found in the cytoplasm. The protein localises to the perinuclear region. Its function is as follows. Isoform 1 regulates endocytosis of activin type 2 receptor kinases through the Ral/RALBP1-dependent pathway and may be involved in suppression of activin-induced signal transduction. Isoform 2 and isoform 3 show a stimulatory affect on activin-induced signal transduction and enhance activin type 2 expression at the cell surface. The protein is Synaptojanin-2-binding protein of Mus musculus (Mouse).